A 273-amino-acid polypeptide reads, in one-letter code: MNRLFVAYKPAGIGSNLFLSRIKREYKTKKAGFSGTLDPFAKGVLIIGMGSYTKLFRFLAKAPKVYRATLWLGAKSDTLDTEMIEEVEILEEFDEADVLKAIKSLEGSLEYEPPIFSAKQINGQRAYDLARAGVEFSLNKINSTIYETKLVSYCHPFVTFEAIVSEGTYIRSLGLIIANRLGVKNGSLSALERLSEGRFKYDNHKPLDIKKSLNMMQNFYHGDSDNLKYGRVLALNDLEIKSDGFYWLDSGSFISIIHVKDAKVNYELGRIEC.

Catalysis depends on Asp-38, which acts as the Nucleophile.

It belongs to the pseudouridine synthase TruB family. Type 1 subfamily.

It carries out the reaction uridine(55) in tRNA = pseudouridine(55) in tRNA. Its function is as follows. Responsible for synthesis of pseudouridine from uracil-55 in the psi GC loop of transfer RNAs. In Sulfurimonas denitrificans (strain ATCC 33889 / DSM 1251) (Thiomicrospira denitrificans (strain ATCC 33889 / DSM 1251)), this protein is tRNA pseudouridine synthase B.